The following is a 226-amino-acid chain: ATP synthase F(0) complex subunit a (226 aa).

Met-1 carries the N-formylmethionine modification. 6 consecutive transmembrane segments (helical) span residues 9–29, 68–88, 97–117, 138–158, 164–184, and 189–209; these read FITP…FPSL, WTLM…LGLL, QLSM…ITGF, IPML…ALAV, ITAG…LMSI, and ALIT…VAMI.

The protein belongs to the ATPase A chain family. Component of the ATP synthase complex composed at least of ATP5F1A/subunit alpha, ATP5F1B/subunit beta, ATP5MC1/subunit c (homooctomer), MT-ATP6/subunit a, MT-ATP8/subunit 8, ATP5ME/subunit e, ATP5MF/subunit f, ATP5MG/subunit g, ATP5MK/subunit k, ATP5MJ/subunit j, ATP5F1C/subunit gamma, ATP5F1D/subunit delta, ATP5F1E/subunit epsilon, ATP5PF/subunit F6, ATP5PB/subunit b, ATP5PD/subunit d, ATP5PO/subunit OSCP. ATP synthase complex consists of a soluble F(1) head domain (subunits alpha(3) and beta(3)) - the catalytic core - and a membrane F(0) domain - the membrane proton channel (subunits c, a, 8, e, f, g, k and j). These two domains are linked by a central stalk (subunits gamma, delta, and epsilon) rotating inside the F1 region and a stationary peripheral stalk (subunits F6, b, d, and OSCP). Interacts with DNAJC30; interaction is direct.

The protein resides in the mitochondrion inner membrane. The enzyme catalyses H(+)(in) = H(+)(out). Functionally, subunit a, of the mitochondrial membrane ATP synthase complex (F(1)F(0) ATP synthase or Complex V) that produces ATP from ADP in the presence of a proton gradient across the membrane which is generated by electron transport complexes of the respiratory chain. ATP synthase complex consist of a soluble F(1) head domain - the catalytic core - and a membrane F(1) domain - the membrane proton channel. These two domains are linked by a central stalk rotating inside the F(1) region and a stationary peripheral stalk. During catalysis, ATP synthesis in the catalytic domain of F(1) is coupled via a rotary mechanism of the central stalk subunits to proton translocation. With the subunit c (ATP5MC1), forms the proton-conducting channel in the F(0) domain, that contains two crucial half-channels (inlet and outlet) that facilitate proton movement from the mitochondrial intermembrane space (IMS) into the matrix. Protons are taken up via the inlet half-channel and released through the outlet half-channel, following a Grotthuss mechanism. The chain is ATP synthase F(0) complex subunit a from Bos taurus (Bovine).